The following is a 266-amino-acid chain: Nickel import ATP-binding protein NikE (266 aa).

The ABC transporter domain occupies 4-252 (ISADNIVKIY…RHPASRLLRE (249 aa)). 45-52 (GRSGCGKS) provides a ligand contact to ATP.

Belongs to the ABC transporter superfamily. Nickel importer (TC 3.A.1.5.3) family. In terms of assembly, the complex is composed of two ATP-binding proteins (NikD and NikE), two transmembrane proteins (NikB and NikC) and a solute-binding protein (NikA).

It is found in the cell inner membrane. It catalyses the reaction Ni(2+)(out) + ATP + H2O = Ni(2+)(in) + ADP + phosphate + H(+). In terms of biological role, part of the ABC transporter complex NikABCDE involved in nickel import. Responsible for energy coupling to the transport system. The protein is Nickel import ATP-binding protein NikE of Brucella abortus (strain 2308).